Here is a 434-residue protein sequence, read N- to C-terminus: Putative polysaccharide biosynthesis protein with aminopeptidase-like domain (434 aa).

Aminopeptidase-like stretches follow at residues Met-1–Val-55 and Ser-57–Asn-355. The tract at residues Lys-56–Gly-164 is insert. Positions 189, 195, and 324 each coordinate Zn(2+). The segment at Arg-356–Val-434 is permutated winged helix-turn-helix.

The protein belongs to the UPF0770 family. In terms of assembly, homotrimer. It depends on Zn(2+) as a cofactor.

Functionally, the genomic context suggests a role in the biosynthesis of modified polysaccharides; this association with genes involved in carbohydrate metabolism is observed in several phylogenetically distinct taxa. Is not expected to have peptidase activity despite low similarity to aminopeptidases. The sequence is that of Putative polysaccharide biosynthesis protein with aminopeptidase-like domain from Clostridium acetobutylicum (strain ATCC 824 / DSM 792 / JCM 1419 / IAM 19013 / LMG 5710 / NBRC 13948 / NRRL B-527 / VKM B-1787 / 2291 / W).